Consider the following 249-residue polypeptide: Ditrans,polycis-undecaprenyl-diphosphate synthase ((2E,6E)-farnesyl-diphosphate specific) (249 aa).

D18 is an active-site residue. D18 provides a ligand contact to Mg(2+). Substrate-binding positions include 19 to 22, F23, K31, H35, and 63 to 65; these read GNNR and SSE. The Proton acceptor role is filled by N66. Substrate is bound by residues W67, R69, R186, and 192–194; that span reads RLS. A Mg(2+)-binding site is contributed by E205.

This sequence belongs to the UPP synthase family. In terms of assembly, homodimer. Requires Mg(2+) as cofactor.

The catalysed reaction is 8 isopentenyl diphosphate + (2E,6E)-farnesyl diphosphate = di-trans,octa-cis-undecaprenyl diphosphate + 8 diphosphate. Catalyzes the sequential condensation of isopentenyl diphosphate (IPP) with (2E,6E)-farnesyl diphosphate (E,E-FPP) to yield (2Z,6Z,10Z,14Z,18Z,22Z,26Z,30Z,34E,38E)-undecaprenyl diphosphate (di-trans,octa-cis-UPP). UPP is the precursor of glycosyl carrier lipid in the biosynthesis of bacterial cell wall polysaccharide components such as peptidoglycan and lipopolysaccharide. The polypeptide is Ditrans,polycis-undecaprenyl-diphosphate synthase ((2E,6E)-farnesyl-diphosphate specific) (Acinetobacter baylyi (strain ATCC 33305 / BD413 / ADP1)).